Reading from the N-terminus, the 67-residue chain is Large ribosomal subunit protein bL35 (67 aa).

This sequence belongs to the bacterial ribosomal protein bL35 family.

This Allorhizobium ampelinum (strain ATCC BAA-846 / DSM 112012 / S4) (Agrobacterium vitis (strain S4)) protein is Large ribosomal subunit protein bL35.